A 190-amino-acid chain; its full sequence is Hypoxanthine/guanine phosphoribosyltransferase (190 aa).

The protein belongs to the purine/pyrimidine phosphoribosyltransferase family. Archaeal HPRT subfamily. In terms of assembly, homodimer.

It localises to the cytoplasm. The enzyme catalyses IMP + diphosphate = hypoxanthine + 5-phospho-alpha-D-ribose 1-diphosphate. It carries out the reaction GMP + diphosphate = guanine + 5-phospho-alpha-D-ribose 1-diphosphate. It participates in purine metabolism; IMP biosynthesis via salvage pathway; IMP from hypoxanthine: step 1/1. Functionally, catalyzes a salvage reaction resulting in the formation of IMP that is energically less costly than de novo synthesis. This chain is Hypoxanthine/guanine phosphoribosyltransferase, found in Methanobacterium lacus (strain AL-21).